We begin with the raw amino-acid sequence, 152 residues long: MGDFGYSFEGYDPTRHVRASLREKQISHKHAREISLHIRGMTVEKARDFLQAVIEKKRAVPFRRFKRQVGHRSDPGVMAGRYPEKSAAEFIKLLDNLESNAEYKGMDLDRLTIVGAVAHKGILIKRFIPRAMGRSTPKNNVLTHVELVAREA.

It belongs to the universal ribosomal protein uL22 family. In terms of assembly, part of the 50S ribosomal subunit.

Functionally, this protein binds specifically to 23S rRNA. It makes multiple contacts with different domains of the 23S rRNA in the assembled 50S subunit and ribosome. In terms of biological role, the globular domain of the protein is located near the polypeptide exit tunnel on the outside of the subunit, while an extended beta-hairpin is found that lines the wall of the exit tunnel in the center of the 70S ribosome. The chain is Large ribosomal subunit protein uL22 from Cenarchaeum symbiosum (strain A).